We begin with the raw amino-acid sequence, 210 residues long: HTH-type transcriptional repressor FabR (210 aa).

The HTH tetR-type domain maps to 10 to 70; it reads KTRRSLVEAA…TMVDESGLML (61 aa). The segment at residues 33 to 52 is a DNA-binding region (H-T-H motif); that stretch reads SLREVAREAGIAPTSFYRHF.

Homodimer.

It is found in the cytoplasm. Represses the transcription of fabB, involved in unsaturated fatty acid (UFA) biosynthesis. By controlling UFA production, FabR directly influences the physical properties of the membrane bilayer. The chain is HTH-type transcriptional repressor FabR from Salmonella paratyphi A (strain ATCC 9150 / SARB42).